A 255-amino-acid polypeptide reads, in one-letter code: Taurine import ATP-binding protein TauB (255 aa).

The 228-residue stretch at 2–229 (LQISHLYADY…RFVAGESSRS (228 aa)) folds into the ABC transporter domain. Position 34-41 (34-41 (GPSGCGKT)) interacts with ATP.

The protein belongs to the ABC transporter superfamily. Taurine importer (TC 3.A.1.17.1) family. As to quaternary structure, the complex is composed of two ATP-binding proteins (TauB), two transmembrane proteins (TauC) and a solute-binding protein (TauA).

The protein localises to the cell inner membrane. It carries out the reaction taurine(out) + ATP + H2O = taurine(in) + ADP + phosphate + H(+). In terms of biological role, part of the ABC transporter complex TauABC involved in taurine import. Responsible for energy coupling to the transport system. The polypeptide is Taurine import ATP-binding protein TauB (Shigella dysenteriae serotype 1 (strain Sd197)).